We begin with the raw amino-acid sequence, 757 residues long: Probable serine/threonine-protein kinase pknA2 (757 aa).

One can recognise a Protein kinase domain in the interval 14 to 274 (YRIVRNIAEG…DGAAAAEELS (261 aa)). ATP-binding positions include 20–28 (IAEGGMATV) and K43. Catalysis depends on D140, which acts as the Proton acceptor. The segment at 344–387 (DTGGAADVNPPAPPVAPTTALDSSTPADASAPHKTQIMAQSGSE) is disordered. PASTA domains follow at residues 466-539 (DANA…VVSK), 545-614 (TIPK…TLSK), and 615-681 (GPMP…VISK).

It belongs to the protein kinase superfamily. Ser/Thr protein kinase family.

The enzyme catalyses L-seryl-[protein] + ATP = O-phospho-L-seryl-[protein] + ADP + H(+). It carries out the reaction L-threonyl-[protein] + ATP = O-phospho-L-threonyl-[protein] + ADP + H(+). The polypeptide is Probable serine/threonine-protein kinase pknA2 (pknA2) (Bifidobacterium longum (strain NCC 2705)).